Consider the following 240-residue polypeptide: Ribonuclease HII (240 aa).

In terms of domain architecture, RNase H type-2 spans 33-222 (GPVAGVDEVG…VRRIVTRSNT (190 aa)). A divalent metal cation contacts are provided by D39, E40, and D131.

It belongs to the RNase HII family. Mn(2+) is required as a cofactor. It depends on Mg(2+) as a cofactor.

It localises to the cytoplasm. It catalyses the reaction Endonucleolytic cleavage to 5'-phosphomonoester.. Endonuclease that specifically degrades the RNA of RNA-DNA hybrids. This chain is Ribonuclease HII, found in Mycobacterium leprae (strain Br4923).